We begin with the raw amino-acid sequence, 1071 residues long: Kinesin-like protein KIN-14J (1071 aa).

The Calponin-homology (CH) domain occupies 39–142 (KKGHQSLVEW…SLKALKASFS (104 aa)). The segment at 157 to 181 (WSLPEDHSDSRGDDRNFTDGFQSKE) is disordered. Positions 158–173 (SLPEDHSDSRGDDRNF) are enriched in basic and acidic residues. A coiled-coil region spans residues 299 to 389 (EKTRIEEKER…ELEKLCQSKS (91 aa)). The 329-residue stretch at 472–800 (NIRVYCRIRP…LKFAERVSGV (329 aa)) folds into the Kinesin motor domain. An ATP-binding site is contributed by 556–563 (GQTGSGKT). Residues 811-844 (GRDVRQLMEQVSNLKDVIAKKDEELQNFQKVKGN) are a coiled coil. Disordered stretches follow at residues 852–931 (GLSN…AAKG) and 995–1071 (ARMT…NRRR). Composition is skewed to basic and acidic residues over residues 910–921 (SDERKHQKDYHQ) and 995–1017 (ARMT…KDRT). Polar residues predominate over residues 1034–1049 (TRPSRLSIATSSSSKA).

It belongs to the TRAFAC class myosin-kinesin ATPase superfamily. Kinesin family. KIN-14 subfamily.

In Arabidopsis thaliana (Mouse-ear cress), this protein is Kinesin-like protein KIN-14J.